Consider the following 727-residue polypeptide: Elongation factor 2 (727 aa).

A tr-type G domain is found at 19–260 (DQIRNMGICA…MAIKHLPNPL (242 aa)). GTP is bound by residues 28–35 (AHIDHGKT), 94–98 (DTPGH), and 148–151 (NKVD). Histidine 603 carries the diphthamide modification.

This sequence belongs to the TRAFAC class translation factor GTPase superfamily. Classic translation factor GTPase family. EF-G/EF-2 subfamily.

It localises to the cytoplasm. Functionally, catalyzes the GTP-dependent ribosomal translocation step during translation elongation. During this step, the ribosome changes from the pre-translocational (PRE) to the post-translocational (POST) state as the newly formed A-site-bound peptidyl-tRNA and P-site-bound deacylated tRNA move to the P and E sites, respectively. Catalyzes the coordinated movement of the two tRNA molecules, the mRNA and conformational changes in the ribosome. The polypeptide is Elongation factor 2 (fusA) (Methanococcus vannielii (strain ATCC 35089 / DSM 1224 / JCM 13029 / OCM 148 / SB)).